A 497-amino-acid chain; its full sequence is RNA-splicing ligase RtcB homolog (497 aa).

5 residues coordinate Mn(2+): Asp111, Cys114, His219, His251, and His345. Residue 218-222 coordinates GMP; that stretch reads NHYAE. GMP-binding positions include 345–346, 394–397, Ser401, 420–423, and Lys496; these read HN, GGTM, and HGAG. Residue His420 is the GMP-histidine intermediate of the active site.

It belongs to the RtcB family. As to quaternary structure, catalytic component of the tRNA-splicing ligase complex. The cofactor is Mn(2+).

It catalyses the reaction a 3'-end 3'-phospho-ribonucleotide-RNA + a 5'-end dephospho-ribonucleoside-RNA + GTP = a ribonucleotidyl-ribonucleotide-RNA + GMP + diphosphate. The enzyme catalyses a 3'-end 2',3'-cyclophospho-ribonucleotide-RNA + a 5'-end dephospho-ribonucleoside-RNA + GTP + H2O = a ribonucleotidyl-ribonucleotide-RNA + GMP + diphosphate + H(+). Catalytic subunit of the tRNA-splicing ligase complex that acts by directly joining spliced tRNA halves to mature-sized tRNAs by incorporating the precursor-derived splice junction phosphate into the mature tRNA as a canonical 3',5'-phosphodiester. May act as an RNA ligase with broad substrate specificity, and may function toward other RNAs. This is RNA-splicing ligase RtcB homolog from Monosiga brevicollis (Choanoflagellate).